Reading from the N-terminus, the 572-residue chain is uncharacterized protein (572 aa).

The interval 13–45 (ALIAKPKGKTVSGDGADPKKRGRPKKNATEPAV) is disordered. Residues 177-204 (VLTKEMEEKLEALDRDMRTAEETKVSIA) are a coiled coil.

This is an uncharacterized protein from Dryophytes versicolor (chameleon treefrog).